The following is a 189-amino-acid chain: Interferon alpha-13 (189 aa).

The signal sequence occupies residues 1 to 23; that stretch reads MARPCAFLMVLVVLSYWSACSLG. 2 disulfide bridges follow: Cys-24-Cys-122 and Cys-52-Cys-162. N-linked (GlcNAc...) asparagine glycosylation is found at Asn-94 and Asn-101.

This sequence belongs to the alpha/beta interferon family.

Its subcellular location is the secreted. In terms of biological role, exhibits antiviral activity against Theiler's virus, Mengo virus and vesicular stomatitis virus. Interferons alpha stimulate the production of two enzymes: a protein kinase and an oligoadenylate synthetase. This chain is Interferon alpha-13 (Ifna13), found in Mus musculus (Mouse).